The following is a 468-amino-acid chain: TFIIA-alpha and beta-like factor (468 aa).

Disordered stretches follow at residues Asp-215–Pro-236 and Asp-379–Asp-416. A compositionally biased stretch (polar residues) spans Ser-380–Ser-391. The span at Pro-401–Asp-416 shows a compositional bias: acidic residues.

Belongs to the TFIIA subunit 1 family. Testis specific. Expressed in pachytene spermatocytes and haploid spermatids.

It is found in the nucleus. Its function is as follows. May function as a testis specific transcription factor. Binds DNA in conjunction with GTF2A2 and TBP (the TATA-binding protein) and together with GTF2A2, allows mRNA transcription. The chain is TFIIA-alpha and beta-like factor (Gtf2a1l) from Mus musculus (Mouse).